The sequence spans 92 residues: UPF0358 protein Exig_1994 (92 aa).

This sequence belongs to the UPF0358 family.

The sequence is that of UPF0358 protein Exig_1994 from Exiguobacterium sibiricum (strain DSM 17290 / CCUG 55495 / CIP 109462 / JCM 13490 / 255-15).